The following is a 250-amino-acid chain: UDP-2,3-diacylglucosamine hydrolase (250 aa).

The Mn(2+) site is built by Asp-8, His-10, Asp-41, Asn-79, and His-114. 79–80 (NR) contacts substrate. 5 residues coordinate substrate: Asp-122, Ser-160, Asp-172, Gln-175, and His-203. Mn(2+) is bound by residues His-203 and His-205.

The protein belongs to the LpxH family. Requires Mn(2+) as cofactor.

The protein localises to the cell inner membrane. The catalysed reaction is UDP-2-N,3-O-bis[(3R)-3-hydroxytetradecanoyl]-alpha-D-glucosamine + H2O = 2-N,3-O-bis[(3R)-3-hydroxytetradecanoyl]-alpha-D-glucosaminyl 1-phosphate + UMP + 2 H(+). It functions in the pathway glycolipid biosynthesis; lipid IV(A) biosynthesis; lipid IV(A) from (3R)-3-hydroxytetradecanoyl-[acyl-carrier-protein] and UDP-N-acetyl-alpha-D-glucosamine: step 4/6. Its function is as follows. Hydrolyzes the pyrophosphate bond of UDP-2,3-diacylglucosamine to yield 2,3-diacylglucosamine 1-phosphate (lipid X) and UMP by catalyzing the attack of water at the alpha-P atom. Involved in the biosynthesis of lipid A, a phosphorylated glycolipid that anchors the lipopolysaccharide to the outer membrane of the cell. The chain is UDP-2,3-diacylglucosamine hydrolase from Xylella fastidiosa (strain M12).